We begin with the raw amino-acid sequence, 348 residues long: Protein pelota homolog (348 aa).

Belongs to the eukaryotic release factor 1 family. Pelota subfamily. As to quaternary structure, monomer. A divalent metal cation serves as cofactor.

The protein localises to the cytoplasm. Its function is as follows. May function in recognizing stalled ribosomes, interact with stem-loop structures in stalled mRNA molecules, and effect endonucleolytic cleavage of the mRNA. May play a role in the release non-functional ribosomes and degradation of damaged mRNAs. Has endoribonuclease activity. In Methanococcus maripaludis (strain DSM 14266 / JCM 13030 / NBRC 101832 / S2 / LL), this protein is Protein pelota homolog.